The following is a 56-amino-acid chain: Large ribosomal subunit protein bL33 (56 aa).

Belongs to the bacterial ribosomal protein bL33 family.

The protein is Large ribosomal subunit protein bL33 of Campylobacter hominis (strain ATCC BAA-381 / DSM 21671 / CCUG 45161 / LMG 19568 / NCTC 13146 / CH001A).